We begin with the raw amino-acid sequence, 44 residues long: Hyaluronidase CdtHya1 (44 aa).

The protein belongs to the glycosyl hydrolase 56 family. In terms of assembly, monomer. In terms of processing, contains disulfide bonds. Post-translationally, glycosylated. Expressed by the venom gland.

It localises to the secreted. It carries out the reaction Random hydrolysis of (1-&gt;4)-linkages between N-acetyl-beta-D-glucosamine and D-glucuronate residues in hyaluronate.. Snake venom endo-hyaluronidase that degrades hyaluronan to smaller oligosaccharide fragments. In venom, it is not toxic by itself, but increases the diffusion of other venom proteins such as crotoxin (a neurotoxic and myotoxic PLA2) by degrading the extracellular matrix. In addition, it displays antiedematogenic activity, since it significantly diminishes the oedematogenic activity of crotoxin (probably by direct substrate hydrolysis, since hyaluronan possesses strong water-binding capacity). This is Hyaluronidase CdtHya1 from Crotalus durissus terrificus (South American rattlesnake).